The chain runs to 916 residues: Phosphoenolpyruvate carboxylase (916 aa).

Active-site residues include His144 and Lys578.

The protein belongs to the PEPCase type 1 family. Mg(2+) is required as a cofactor.

The catalysed reaction is oxaloacetate + phosphate = phosphoenolpyruvate + hydrogencarbonate. Its function is as follows. Forms oxaloacetate, a four-carbon dicarboxylic acid source for the tricarboxylic acid cycle. This chain is Phosphoenolpyruvate carboxylase, found in Aromatoleum aromaticum (strain DSM 19018 / LMG 30748 / EbN1) (Azoarcus sp. (strain EbN1)).